The primary structure comprises 149 residues: Nucleoside diphosphate kinase (149 aa).

Positions 9, 57, 85, 91, 102, and 112 each coordinate ATP. The active-site Pros-phosphohistidine intermediate is H115.

It belongs to the NDK family. The cofactor is Mg(2+).

It is found in the cytoplasm. It catalyses the reaction a 2'-deoxyribonucleoside 5'-diphosphate + ATP = a 2'-deoxyribonucleoside 5'-triphosphate + ADP. It carries out the reaction a ribonucleoside 5'-diphosphate + ATP = a ribonucleoside 5'-triphosphate + ADP. Major role in the synthesis of nucleoside triphosphates other than ATP. The ATP gamma phosphate is transferred to the NDP beta phosphate via a ping-pong mechanism, using a phosphorylated active-site intermediate. In Methanocorpusculum labreanum (strain ATCC 43576 / DSM 4855 / Z), this protein is Nucleoside diphosphate kinase.